Consider the following 131-residue polypeptide: UPF0102 protein CYA_0708 (131 aa).

The protein belongs to the UPF0102 family.

The sequence is that of UPF0102 protein CYA_0708 from Synechococcus sp. (strain JA-3-3Ab) (Cyanobacteria bacterium Yellowstone A-Prime).